A 95-amino-acid polypeptide reads, in one-letter code: Aspartyl/glutamyl-tRNA(Asn/Gln) amidotransferase subunit C (95 aa).

Belongs to the GatC family. Heterotrimer of A, B and C subunits.

The enzyme catalyses L-glutamyl-tRNA(Gln) + L-glutamine + ATP + H2O = L-glutaminyl-tRNA(Gln) + L-glutamate + ADP + phosphate + H(+). It catalyses the reaction L-aspartyl-tRNA(Asn) + L-glutamine + ATP + H2O = L-asparaginyl-tRNA(Asn) + L-glutamate + ADP + phosphate + 2 H(+). Allows the formation of correctly charged Asn-tRNA(Asn) or Gln-tRNA(Gln) through the transamidation of misacylated Asp-tRNA(Asn) or Glu-tRNA(Gln) in organisms which lack either or both of asparaginyl-tRNA or glutaminyl-tRNA synthetases. The reaction takes place in the presence of glutamine and ATP through an activated phospho-Asp-tRNA(Asn) or phospho-Glu-tRNA(Gln). This Pseudomonas putida (strain W619) protein is Aspartyl/glutamyl-tRNA(Asn/Gln) amidotransferase subunit C.